A 219-amino-acid polypeptide reads, in one-letter code: Ribosomal RNA large subunit methyltransferase E (219 aa).

The S-adenosyl-L-methionine site is built by G60, W62, D80, D96, and D120. The Proton acceptor role is filled by K160.

It belongs to the class I-like SAM-binding methyltransferase superfamily. RNA methyltransferase RlmE family.

Its subcellular location is the cytoplasm. The enzyme catalyses uridine(2552) in 23S rRNA + S-adenosyl-L-methionine = 2'-O-methyluridine(2552) in 23S rRNA + S-adenosyl-L-homocysteine + H(+). Functionally, specifically methylates the uridine in position 2552 of 23S rRNA at the 2'-O position of the ribose in the fully assembled 50S ribosomal subunit. The polypeptide is Ribosomal RNA large subunit methyltransferase E (Acidithiobacillus ferrooxidans (strain ATCC 23270 / DSM 14882 / CIP 104768 / NCIMB 8455) (Ferrobacillus ferrooxidans (strain ATCC 23270))).